Reading from the N-terminus, the 144-residue chain is Peptide methionine sulfoxide reductase B7 (144 aa).

The MsrB domain occupies D19–A140. Positions 58, 61, 104, and 107 each coordinate Zn(2+). Residues C76 and C129 are joined by a disulfide bond. C129 serves as the catalytic Nucleophile.

Belongs to the MsrB Met sulfoxide reductase family. Zn(2+) serves as cofactor.

It is found in the cytoplasm. The protein localises to the cytosol. The enzyme catalyses L-methionyl-[protein] + [thioredoxin]-disulfide + H2O = L-methionyl-(R)-S-oxide-[protein] + [thioredoxin]-dithiol. Functionally, catalyzes the reduction of methionine sulfoxide (MetSO) to methionine in proteins. Plays a protective role against oxidative stress by restoring activity to proteins that have been inactivated by methionine oxidation. MSRB family specifically reduces the MetSO R-enantiomer. This chain is Peptide methionine sulfoxide reductase B7 (MSRB7), found in Arabidopsis thaliana (Mouse-ear cress).